A 146-amino-acid chain; its full sequence is Large ribosomal subunit protein uL15 (146 aa).

Basic and acidic residues predominate over residues 1–13; it reads MKLNELKPNEGSR. The segment at 1 to 54 is disordered; that stretch reads MKLNELKPNEGSRRNRKRVGRGTSSGYGKTAGRGQKGQLARTGGKTRLGFEGGQ. Residues 23-35 are compositionally biased toward gly residues; sequence TSSGYGKTAGRGQ.

Belongs to the universal ribosomal protein uL15 family. Part of the 50S ribosomal subunit.

Its function is as follows. Binds to the 23S rRNA. The polypeptide is Large ribosomal subunit protein uL15 (Lactobacillus gasseri (strain ATCC 33323 / DSM 20243 / BCRC 14619 / CIP 102991 / JCM 1131 / KCTC 3163 / NCIMB 11718 / NCTC 13722 / AM63)).